We begin with the raw amino-acid sequence, 586 residues long: Guanylate-binding protein 5 (586 aa).

An NLRP3-binding region spans residues 1 to 306 (MALEIHMSDP…TYVNAISSGD (306 aa)). Residues 1 to 309 (MALEIHMSDP…NAISSGDLPC (309 aa)) form a GTPase domain (Globular) region. A GB1/RHD3-type G domain is found at 35–276 (TQPVVVVAIV…FCSYIFSHSM (242 aa)). GTP contacts are provided by residues 45 to 52 (GLYRTGKS), 67 to 69 (VAS), 181 to 182 (RD), and Leu245. The tract at residues 529–586 (MEIAKQNWLAEQQKMQEQQMQEQAAQLSTTFQAQNRSLLSELQHAQRTVNNDDPCVLL) is required for tetramerization, but not for dimerization. Residue Cys583 is modified to Cysteine methyl ester. Cys583 carries S-geranylgeranyl cysteine lipidation. The propeptide at 584-586 (VLL) is removed in mature form.

It belongs to the TRAFAC class dynamin-like GTPase superfamily. GB1/RHD3 GTPase family. GB1 subfamily. Homodimer; homodimerizes upon GTP-binding, forming a close face-to-face dimer. Heterodimer with other family members, including GBP1, GBP2, GBP3 and GBP4. May also form tetramers (dimer of dimers) in the presence of GTP. Interacts with NLRP3, possibly in its tetrameric form, and promotes PYCARD/ASC polymerization. In terms of assembly, homodimer; homodimerizes upon GTP-binding. GDP-bound form remains homodimeric. As to quaternary structure, homodimer; homodimerizes upon GTP-binding. GDP-bound is monomeric. Isoprenylation is required for proper subcellular location. As to expression, expressed in peripheral blood monocytes (at protein level).

The protein resides in the cytoplasmic vesicle membrane. The protein localises to the golgi apparatus membrane. It localises to the cytoplasm. The catalysed reaction is GTP + H2O = GDP + phosphate + H(+). Functionally, interferon (IFN)-inducible GTPase that plays important roles in innate immunity against a diverse range of bacterial, viral and protozoan pathogens. Hydrolyzes GTP, but in contrast to other family members, does not produce GMP. Following infection, recruited to the pathogen-containing vacuoles or vacuole-escaped bacteria and acts as a positive regulator of inflammasome assembly by promoting the release of inflammasome ligands from bacteria. Acts by promoting lysis of pathogen-containing vacuoles, releasing pathogens into the cytosol. Following pathogen release in the cytosol, promotes recruitment of proteins that mediate bacterial cytolysis: this liberates ligands that are detected by inflammasomes, such as lipopolysaccharide (LPS) that activates the non-canonical CASP4/CASP11 inflammasome or double-stranded DNA (dsDNA) that activates the AIM2 inflammasome. As an activator of NLRP3 inflammasome assembly: promotes selective NLRP3 inflammasome assembly in response to microbial and soluble, but not crystalline, agents. Independently of its GTPase activity, acts as an inhibitor of various viruses infectivity, such as HIV-1, Zika and influenza A viruses, by inhibiting FURIN-mediated maturation of viral envelope proteins. Its function is as follows. Antigenic tumor-specific truncated splice form. The sequence is that of Guanylate-binding protein 5 from Homo sapiens (Human).